Here is a 311-residue protein sequence, read N- to C-terminus: Ribonuclease HIII (311 aa).

One can recognise an RNase H type-2 domain in the interval 93–310; sequence LSAIGSDEVG…TKKALDIAKH (218 aa). 3 residues coordinate a divalent metal cation: D99, E100, and D204.

This sequence belongs to the RNase HII family. RnhC subfamily. Requires Mn(2+) as cofactor. It depends on Mg(2+) as a cofactor.

It localises to the cytoplasm. It catalyses the reaction Endonucleolytic cleavage to 5'-phosphomonoester.. Endonuclease that specifically degrades the RNA of RNA-DNA hybrids. The chain is Ribonuclease HIII from Geobacillus kaustophilus (strain HTA426).